The primary structure comprises 248 residues: UPF0246 protein RPR_00055 (248 aa).

Belongs to the UPF0246 family.

This Rickettsia peacockii (strain Rustic) protein is UPF0246 protein RPR_00055.